The sequence spans 164 residues: Galectin-3 (164 aa).

The Galectin domain maps to 9-154 (STVDLSEPLK…FSDVLGVTVL (146 aa)). H60, R64, N73, and E84 together coordinate a carbohydrate.

In terms of assembly, homotetramer. Oligomerization is required for carbohydrate binding.

Its subcellular location is the secreted. The protein resides in the extracellular space. The protein localises to the extracellular matrix. It is found in the cell wall. Binds lactose. May play a role in fruiting body formation. This is Galectin-3 (Cgl3) from Coprinopsis cinerea (strain Okayama-7 / 130 / ATCC MYA-4618 / FGSC 9003) (Inky cap fungus).